The chain runs to 955 residues: Thrombospondin-4 (955 aa).

A signal peptide spans 1-24 (MPRRKGLCLFLQMLLLHLYGVCQA). The 168-residue stretch at 25–192 (QPNYQVFDLL…MDELKLVMGG (168 aa)) folds into the Laminin G-like domain. Residues 281–320 (PKPRCDATSCFRGVRCIDTEGGFQCGPCPEGYTGNGVICT) form the EGF-like 1 domain. Disulfide bonds link Cys285-Cys296, Cys290-Cys305, Cys308-Cys319, Cys325-Cys336, Cys330-Cys345, Cys348-Cys372, Cys378-Cys392, Cys386-Cys401, Cys404-Cys416, Cys422-Cys435, Cys429-Cys445, Cys447-Cys458, Cys474-Cys479, Cys484-Cys504, Cys520-Cys540, Cys543-Cys563, Cys579-Cys599, Cys602-Cys622, Cys640-Cys660, Cys680-Cys700, and Cys716-Cys937. The EGF-like 2; calcium-binding domain maps to 321–358 (DVDECRLNPCFLGVRCINTSPGFKCESCPPGYTGSTIQ). The EGF-like 3; calcium-binding domain occupies 374-415 (DTNECENGRNGGCTSNSLCINTMGSFRCGGCKPGYVGDQIKG). One can recognise an EGF-like 4 domain in the interval 418–459 (PEKSCRHGQNPCHASAQCSEEKDGDVTCTCSVGWAGNGYLCG). TSP type-3 repeat units lie at residues 460–492 (KDTD…NSGQ), 493–528 (EDTD…NIDQ), 529–551 (KNSD…NNDQ), 552–587 (RDTD…NVDQ), 588–610 (KDKD…NPNQ), 611–648 (SDID…NSNQ), 649–688 (LDTD…NPGQ), and 689–724 (EDDN…EITL). The N-linked (GlcNAc...) asparagine glycan is linked to Asn609. Residues 610–678 (QSDIDNDLVG…IPDTVPPGPD (69 aa)) form a disordered region. Residues 637 to 649 (TDNCPTVINSNQL) are compositionally biased toward polar residues. Positions 657 to 668 (GDECDDDDDNDG) are enriched in acidic residues. Residues 728-942 (RAYQTVVLDP…LKYRCNDTIP (215 aa)) enclose the TSP C-terminal domain. N-linked (GlcNAc...) asparagine glycosylation occurs at Asn938.

This sequence belongs to the thrombospondin family. Homotrimer; disulfide-linked.

It localises to the endoplasmic reticulum. The protein localises to the sarcoplasmic reticulum. It is found in the secreted. The protein resides in the extracellular space. Its subcellular location is the extracellular matrix. Functionally, adhesive glycoprotein that mediates cell-to-cell and cell-to-matrix interactions and may be involved in various processes including cellular proliferation, migration, adhesion and attachment. May play a role in ER stress response. May participate in the genesis and function of cardiac and skeletal muscle. The sequence is that of Thrombospondin-4 (thbs4) from Xenopus laevis (African clawed frog).